The following is a 609-amino-acid chain: Copper resistance protein A (609 aa).

The segment at residues 1-32 is a signal peptide (tat-type signal); sequence MESRTSRRTFVKGLAAAGVLGGLGLWRSPSWA. Positions 100, 102, 142, and 144 each coordinate Cu cation. Tandem repeats lie at residues 367–374, 375–382, 408–415, 419–426, and 427–434. Residues 367–434 form a 5 X 8 AA tandem repeats of D-H-X-X-M-X-G-M region; that stretch reads DDMGMGGMDH…GMDHGAMGGM (68 aa). Residues His542, His545, His547, His590, Cys591, His592, His596, and Met601 each contribute to the Cu cation site.

Belongs to the multicopper oxidase family. CopA subfamily. Predicted to be exported by the Tat system. The position of the signal peptide cleavage has been experimentally proven.

The protein localises to the periplasm. Its function is as follows. Mediates copper resistance by sequestration of copper in the periplasm along with the copper-binding protein CopC. May have oxidase activity. The chain is Copper resistance protein A (copA) from Pseudomonas syringae pv. tomato.